A 66-amino-acid chain; its full sequence is Large ribosomal subunit protein bL31 (66 aa).

Zn(2+)-binding residues include C16, C18, C36, and C39.

The protein belongs to the bacterial ribosomal protein bL31 family. Type A subfamily. As to quaternary structure, part of the 50S ribosomal subunit. The cofactor is Zn(2+).

Its function is as follows. Binds the 23S rRNA. The protein is Large ribosomal subunit protein bL31 of Leptospira biflexa serovar Patoc (strain Patoc 1 / Ames).